A 269-amino-acid polypeptide reads, in one-letter code: Mitochondrial acidic protein mam33 (269 aa).

Belongs to the MAM33 family.

It is found in the cytoplasm. The protein localises to the mitochondrion matrix. The polypeptide is Mitochondrial acidic protein mam33 (Schizosaccharomyces pombe (strain 972 / ATCC 24843) (Fission yeast)).